Here is a 126-residue protein sequence, read N- to C-terminus: Aspartate 1-decarboxylase (126 aa).

Ser-25 (schiff-base intermediate with substrate; via pyruvic acid) is an active-site residue. Ser-25 bears the Pyruvic acid (Ser) mark. Thr-57 is a substrate binding site. Catalysis depends on Tyr-58, which acts as the Proton donor. A substrate-binding site is contributed by 73–75 (GAA).

The protein belongs to the PanD family. As to quaternary structure, heterooctamer of four alpha and four beta subunits. Requires pyruvate as cofactor. Post-translationally, is synthesized initially as an inactive proenzyme, which is activated by self-cleavage at a specific serine bond to produce a beta-subunit with a hydroxyl group at its C-terminus and an alpha-subunit with a pyruvoyl group at its N-terminus.

It localises to the cytoplasm. It carries out the reaction L-aspartate + H(+) = beta-alanine + CO2. Its pathway is cofactor biosynthesis; (R)-pantothenate biosynthesis; beta-alanine from L-aspartate: step 1/1. Its function is as follows. Catalyzes the pyruvoyl-dependent decarboxylation of aspartate to produce beta-alanine. This is Aspartate 1-decarboxylase from Stutzerimonas stutzeri (strain A1501) (Pseudomonas stutzeri).